Consider the following 641-residue polypeptide: Chaperone protein DnaK (641 aa).

Thr-199 bears the Phosphothreonine; by autocatalysis mark. Residues 603 to 613 are compositionally biased toward polar residues; sequence YTQQGGTAGSE. Residues 603-641 are disordered; the sequence is YTQQGGTAGSETHSHEKAGGSGGDDVVDAEFEEVRDDKR. Residues 627–641 show a composition bias toward acidic residues; that stretch reads DVVDAEFEEVRDDKR.

The protein belongs to the heat shock protein 70 family.

Functionally, acts as a chaperone. In Methylococcus capsulatus (strain ATCC 33009 / NCIMB 11132 / Bath), this protein is Chaperone protein DnaK.